We begin with the raw amino-acid sequence, 374 residues long: Glutamate 5-kinase (374 aa).

Lys13 is an ATP binding site. Substrate is bound by residues Ser54, Asp141, and Asn153. 173-174 (SD) contacts ATP. A PUA domain is found at 278-355 (KGTVHLDSGA…NEIESVLGYP (78 aa)).

This sequence belongs to the glutamate 5-kinase family.

The protein localises to the cytoplasm. It catalyses the reaction L-glutamate + ATP = L-glutamyl 5-phosphate + ADP. Its pathway is amino-acid biosynthesis; L-proline biosynthesis; L-glutamate 5-semialdehyde from L-glutamate: step 1/2. Catalyzes the transfer of a phosphate group to glutamate to form L-glutamate 5-phosphate. This chain is Glutamate 5-kinase, found in Roseobacter denitrificans (strain ATCC 33942 / OCh 114) (Erythrobacter sp. (strain OCh 114)).